Reading from the N-terminus, the 1031-residue chain is Probable ATP-dependent RNA helicase DDX46 (1031 aa).

Positions 1–24 (MGRESRHYRKRSASRGRSGSRSRS) are enriched in basic residues. Positions 1–228 (MGRESRHYRK…EMEGEELDPL (228 aa)) are disordered. Glycine 2 is lipidated: N-myristoyl glycine. Positions 26-49 (SPSDKRSKRGDDRRSRSRDRDRRR) are enriched in basic and acidic residues. 2 stretches are compositionally biased toward basic residues: residues 50–73 (ERSRSRDKRRSRSRDRKRLRRSRS) and 81–103 (ERRRSRSRDRRRSRSRSRGRRSR). A compositionally biased stretch (basic and acidic residues) spans 112-200 (KKTENRSRSK…EMKQGKKWSL (89 aa)). Positions 152 to 197 (DQNKLEEEMRKRKERVEKWREEQRKKAMENIGELKKEIEEMKQGKK) form a coiled coil. Residue lysine 186 forms a Glycyl lysine isopeptide (Lys-Gly) (interchain with G-Cter in SUMO2) linkage. A Phosphoserine modification is found at serine 199. Acidic residues-rich tracts occupy residues 201 to 211 (EDDDDDEDDPA) and 219 to 228 (EMEGEELDPL). An N6-acetyllysine modification is found at lysine 263. Tyrosine 294 carries the post-translational modification Phosphotyrosine. Phosphoserine occurs at positions 295 and 296. A Glycyl lysine isopeptide (Lys-Gly) (interchain with G-Cter in SUMO2) cross-link involves residue lysine 325. Phosphoserine is present on serine 346. The short motif at 372–400 (KSWVQCGISMKILNSLKKHGYEKPTPIQT) is the Q motif element. Positions 403 to 581 (IPAIMSGRDL…RRILSKPIEV (179 aa)) constitute a Helicase ATP-binding domain. 416-423 (AKTGSGKT) serves as a coordination point for ATP. Residues 529–532 (DEAD) carry the DEAD box motif. The Helicase C-terminal domain occupies 592-753 (DVEQQVIVIE…AVPPDLEKLW (162 aa)). Lysine 776 is subject to N6-acetyllysine. Lysine 779 is covalently cross-linked (Glycyl lysine isopeptide (Lys-Gly) (interchain with G-Cter in SUMO2)). Serine 804 is subject to Phosphoserine. Position 903 is an N6-acetyllysine (lysine 903). Residues lysine 907 and lysine 915 each participate in a glycyl lysine isopeptide (Lys-Gly) (interchain with G-Cter in SUMO2) cross-link. Serine 928 carries the phosphoserine modification.

The protein belongs to the DEAD box helicase family. DDX46/PRP5 subfamily. In terms of assembly, component of the 17S U2 SnRNP complex, a ribonucleoprotein complex that contains small nuclear RNA (snRNA) U2 and a number of specific proteins. Within the 17S U2 SnRNP complex, DDX46 is part of the SF3B subcomplex, which is required for 'A' complex assembly formed by the stable binding of U2 snRNP to the branchpoint sequence in pre-mRNA. Recruited to the 17S U2 SnRNP complex following release of DDX42; DDX42 and DDX46 bind the SF3B subcomplex in a competitive manner.

It is found in the nucleus speckle. The protein resides in the nucleus. It localises to the cajal body. The enzyme catalyses ATP + H2O = ADP + phosphate + H(+). In terms of biological role, component of the 17S U2 SnRNP complex of the spliceosome, a large ribonucleoprotein complex that removes introns from transcribed pre-mRNAs. The 17S U2 SnRNP complex (1) directly participates in early spliceosome assembly and (2) mediates recognition of the intron branch site during pre-mRNA splicing by promoting the selection of the pre-mRNA branch-site adenosine, the nucleophile for the first step of splicing. Within the 17S U2 SnRNP complex, DDX46 plays essential roles during assembly of pre-spliceosome and proofreading of the branch site. In Homo sapiens (Human), this protein is Probable ATP-dependent RNA helicase DDX46.